A 227-amino-acid polypeptide reads, in one-letter code: DnaJ homolog subfamily B member 8 (227 aa).

One can recognise a J domain in the interval 3–69 (NYYEVLGVQS…KKRSVYDRAG (67 aa)).

Interacts with histone deacetylases HDAC4, HDAC6, and SIRT2, HDAC activity is required for antiaggregation.

Functionally, efficient suppressor of aggregation and toxicity of disease-associated polyglutamine proteins. This is DnaJ homolog subfamily B member 8 (Dnajb8) from Mus musculus (Mouse).